Consider the following 238-residue polypeptide: Ribonuclease 3 (238 aa).

The region spanning 9-141 (LIDFMEKIGY…VVAAVYIDGG (133 aa)) is the RNase III domain. A Mg(2+)-binding site is contributed by Glu-54. The active site involves Asp-58. Mg(2+) is bound by residues Asp-127 and Glu-130. The active site involves Glu-130. Positions 168–237 (DYKTSLQEIT…ARRAIEKLKG (70 aa)) constitute a DRBM domain.

It belongs to the ribonuclease III family. In terms of assembly, homodimer. Mg(2+) is required as a cofactor.

The protein resides in the cytoplasm. The enzyme catalyses Endonucleolytic cleavage to 5'-phosphomonoester.. Functionally, digests double-stranded RNA. Involved in the processing of primary rRNA transcript to yield the immediate precursors to the large and small rRNAs (23S and 16S). Processes some mRNAs, and tRNAs when they are encoded in the rRNA operon. Processes pre-crRNA and tracrRNA of type II CRISPR loci if present in the organism. The polypeptide is Ribonuclease 3 (Pseudothermotoga lettingae (strain ATCC BAA-301 / DSM 14385 / NBRC 107922 / TMO) (Thermotoga lettingae)).